The primary structure comprises 172 residues: Adrenodoxin-like protein 1, mitochondrial (172 aa).

The 103-residue stretch at 57–159 (VNITYVDKDG…GMELELPKAT (103 aa)) folds into the 2Fe-2S ferredoxin-type domain. [2Fe-2S] cluster is bound by residues cysteine 94, cysteine 100, cysteine 103, and cysteine 140.

It belongs to the adrenodoxin/putidaredoxin family. Requires [2Fe-2S] cluster as cofactor.

Its subcellular location is the mitochondrion matrix. In terms of biological role, required for ecdysteroidogenesis in the prothoracic gland which is necessary for larval to pupal transition. The polypeptide is Adrenodoxin-like protein 1, mitochondrial (Drosophila melanogaster (Fruit fly)).